The primary structure comprises 116 residues: Large ribosomal subunit protein bL17 (116 aa).

This sequence belongs to the bacterial ribosomal protein bL17 family. Part of the 50S ribosomal subunit. Contacts protein L32.

The protein is Large ribosomal subunit protein bL17 of Deinococcus geothermalis (strain DSM 11300 / CIP 105573 / AG-3a).